The chain runs to 820 residues: Scavenger receptor class F member 1 (820 aa).

The first 23 residues, 1-23, serve as a signal peptide directing secretion; it reads MLAAMGLELVFSLLLLWTQGTQG. Residues 24–422 are Extracellular-facing; sequence STLDPAGQHV…TCQLGRHGKN (399 aa). EGF-like domains are found at residues 56–90, 98–133, 163–193, and 217–251; these read TIPI…AQCS, WGHD…RLCE, RRPC…RRCS, and WGPE…IRCE. 12 disulfides stabilise this stretch: C60-C72, C66-C78, C80-C89, C102-C114, C108-C121, C123-C132, C166-C174, C168-C181, C183-C192, C221-C232, C225-C239, and C241-C250. Residue N291 is glycosylated (N-linked (GlcNAc...) asparagine). EGF-like domains lie at 304–341 and 353–384; these read FGER…HRCE and CSST…TSCN. The helical transmembrane segment at 423 to 443 threads the bilayer; sequence ALIVGILVPLLLLLMGIVCCA. The Cytoplasmic portion of the chain corresponds to 444 to 820; sequence YCCSGTRLDP…VVPMSVPPQH (377 aa). Disordered regions lie at residues 549-685 and 715-820; these read PMAQ…IQES and NYQK…PPQH. Phosphoserine occurs at positions 590 and 607. Residues 631–648 show a composition bias toward acidic residues; it reads QEAEESTGPEQVNTEEDA. Residues 650–662 are compositionally biased toward polar residues; it reads TATSSGDPATSHG.

As to quaternary structure, heterophilic interaction with SREC2 via its extracellular domain. The heterophilic interaction is suppressed by the presence of ligand such as Ac-LDL. Interacts with AVIL; the interaction occurs in embryonic dorsal root ganglions at 18 dpc and induces neurite-like outgrowth. In terms of tissue distribution, expressed weakly in brain, spinal cord and dorsal root ganglions.

The protein resides in the membrane. In terms of biological role, mediates the binding and degradation of acetylated low density lipoprotein (Ac-LDL). Mediates heterophilic interactions, suggesting a function as adhesion protein. Plays a role in the regulation of neurite-like outgrowth. This is Scavenger receptor class F member 1 (Scarf1) from Mus musculus (Mouse).